The chain runs to 300 residues: UDP-N-acetylenolpyruvoylglucosamine reductase (300 aa).

Residues 27–216 enclose the FAD-binding PCMH-type domain; the sequence is RVGGPADVIF…TERREKTQPI (190 aa). Arginine 172 is an active-site residue. Serine 223 (proton donor) is an active-site residue. The active site involves glutamate 293.

This sequence belongs to the MurB family. The cofactor is FAD.

The protein localises to the cytoplasm. It carries out the reaction UDP-N-acetyl-alpha-D-muramate + NADP(+) = UDP-N-acetyl-3-O-(1-carboxyvinyl)-alpha-D-glucosamine + NADPH + H(+). It participates in cell wall biogenesis; peptidoglycan biosynthesis. Functionally, cell wall formation. The sequence is that of UDP-N-acetylenolpyruvoylglucosamine reductase from Phenylobacterium zucineum (strain HLK1).